The primary structure comprises 239 residues: DNA repair protein RecO (239 aa).

The protein belongs to the RecO family.

Functionally, involved in DNA repair and RecF pathway recombination. The sequence is that of DNA repair protein RecO from Tolumonas auensis (strain DSM 9187 / NBRC 110442 / TA 4).